Reading from the N-terminus, the 170-residue chain is MTAVPKKISPQDGFFWKTKTLEEMSQAEWESLCDGCARCCLEKLEDEDSGRIYFTHVGCRLLDGDACACHDYANRSERVPDCVRLTPENVRTLSWLPPSCGYRLVAEGRDLYWWHPLISGDPNTVHDAGVSVRGRVEATETEVSVEDLEDHIVSWPALLPRRAKLKKRPG.

This sequence belongs to the UPF0260 family.

In Rhodopseudomonas palustris (strain HaA2), this protein is UPF0260 protein RPB_3505.